The following is a 324-amino-acid chain: tRNA N6-adenosine threonylcarbamoyltransferase (324 aa).

Positions 107, 111, and 127 each coordinate Fe cation. Substrate is bound by residues 127–131, aspartate 159, glycine 172, glutamate 176, and asparagine 257; that span reads YVSGG. Aspartate 285 is a binding site for Fe cation.

It belongs to the KAE1 / TsaD family. As to quaternary structure, monomer. Component of the KEOPS complex that consists of Kae1, Bud32, Cgi121 and Pcc1; the whole complex dimerizes. Fe(2+) is required as a cofactor.

Its subcellular location is the cytoplasm. It carries out the reaction L-threonylcarbamoyladenylate + adenosine(37) in tRNA = N(6)-L-threonylcarbamoyladenosine(37) in tRNA + AMP + H(+). In terms of biological role, required for the formation of a threonylcarbamoyl group on adenosine at position 37 (t(6)A37) in tRNAs that read codons beginning with adenine. Is a component of the KEOPS complex that is probably involved in the transfer of the threonylcarbamoyl moiety of threonylcarbamoyl-AMP (TC-AMP) to the N6 group of A37. Kae1 likely plays a direct catalytic role in this reaction, but requires other protein(s) of the complex to fulfill this activity. The polypeptide is tRNA N6-adenosine threonylcarbamoyltransferase (Pyrococcus horikoshii (strain ATCC 700860 / DSM 12428 / JCM 9974 / NBRC 100139 / OT-3)).